The following is an 88-amino-acid chain: Small ribosomal subunit protein uS19 (88 aa).

This sequence belongs to the universal ribosomal protein uS19 family.

In terms of biological role, protein S19 forms a complex with S13 that binds strongly to the 16S ribosomal RNA. The sequence is that of Small ribosomal subunit protein uS19 (rpsS) from Mycoplasma capricolum subsp. capricolum (strain California kid / ATCC 27343 / NCTC 10154).